A 433-amino-acid chain; its full sequence is Histidinol dehydrogenase (433 aa).

NAD(+) is bound by residues tyrosine 130, glutamine 191, and asparagine 214. Positions 237, 259, and 262 each coordinate substrate. Positions 259 and 262 each coordinate Zn(2+). Active-site proton acceptor residues include glutamate 327 and histidine 328. The substrate site is built by histidine 328, aspartate 361, glutamate 415, and histidine 420. Residue aspartate 361 participates in Zn(2+) binding. Histidine 420 provides a ligand contact to Zn(2+).

Belongs to the histidinol dehydrogenase family. Requires Zn(2+) as cofactor.

It catalyses the reaction L-histidinol + 2 NAD(+) + H2O = L-histidine + 2 NADH + 3 H(+). It functions in the pathway amino-acid biosynthesis; L-histidine biosynthesis; L-histidine from 5-phospho-alpha-D-ribose 1-diphosphate: step 9/9. Its function is as follows. Catalyzes the sequential NAD-dependent oxidations of L-histidinol to L-histidinaldehyde and then to L-histidine. This chain is Histidinol dehydrogenase, found in Ruegeria pomeroyi (strain ATCC 700808 / DSM 15171 / DSS-3) (Silicibacter pomeroyi).